Consider the following 478-residue polypeptide: Divinyl ether synthase CYP74D3 (478 aa).

C432 serves as a coordination point for heme.

The protein belongs to the cytochrome P450 family. 9-divinyl ether synthase subfamily. In terms of tissue distribution, not detected in leaves, stems or roots of healthy plants.

It is found in the cytoplasm. The protein resides in the cytosol. It catalyses the reaction (9S)-hydroperoxy-(10E,12Z)-octadecadienoate = colneleate + H2O. The catalysed reaction is (9S)-hydroperoxy-(10E,12Z,15Z)-octadecatrienoate = colnelenate + H2O. Strictly inducible cytochrome P450 involved in the biosynthesis of the anti-fungal toxins colneleate and colnelenate. Can use (9S)-hydroperoxy-(10E,12Z)-octadecadienoate (9-HPOD) and (9S)-hydroperoxy-(10E,12Z,15Z)-octadecatrienoate (9-HPOT) as substrates, but has a very low activity with the corresponding 13-hydroperoxides (13-HPOD and 13-POT). This chain is Divinyl ether synthase CYP74D3, found in Nicotiana tabacum (Common tobacco).